Consider the following 476-residue polypeptide: Phosphomethylpyrimidine synthase (476 aa).

Residues 1–27 (MSTQLQHARDGTVTDAMRRVADREGRD) form a disordered region. The span at 7-27 (HARDGTVTDAMRRVADREGRD) shows a compositional bias: basic and acidic residues. Substrate-binding positions include Asn-67, Met-96, Tyr-125, His-160, 180 to 182 (SRG), 221 to 224 (DGLR), and Glu-260. Position 264 (His-264) interacts with Zn(2+). A substrate-binding site is contributed by Tyr-287. His-328 provides a ligand contact to Zn(2+). 3 residues coordinate [4Fe-4S] cluster: Cys-408, Cys-411, and Cys-416. Residues 425–476 (RDAGDDADDMTELTTETDLSESAAAEVNRPPTGTHDAPAAEQAPSPGDDDDD) form a disordered region. Positions 436–447 (ELTTETDLSESA) are enriched in low complexity.

It belongs to the ThiC family. It depends on [4Fe-4S] cluster as a cofactor.

The enzyme catalyses 5-amino-1-(5-phospho-beta-D-ribosyl)imidazole + S-adenosyl-L-methionine = 4-amino-2-methyl-5-(phosphooxymethyl)pyrimidine + CO + 5'-deoxyadenosine + formate + L-methionine + 3 H(+). It functions in the pathway cofactor biosynthesis; thiamine diphosphate biosynthesis. In terms of biological role, catalyzes the synthesis of the hydroxymethylpyrimidine phosphate (HMP-P) moiety of thiamine from aminoimidazole ribotide (AIR) in a radical S-adenosyl-L-methionine (SAM)-dependent reaction. The protein is Phosphomethylpyrimidine synthase of Halobacterium salinarum (strain ATCC 29341 / DSM 671 / R1).